The following is a 111-amino-acid chain: MAVKIRLARGGAKKRPFYRVVIANAAAPRDGDFLEKVGTYNPMLASDNSERVVLKKDRIEYWLGTGAKPTERVAKFIEQAGLTLPEKVKKEMDVKAKNRKARSSKQEAKEA.

Residues Met92 to Ala111 are disordered.

Belongs to the bacterial ribosomal protein bS16 family.

The sequence is that of Small ribosomal subunit protein bS16 from Rickettsia akari (strain Hartford).